The chain runs to 471 residues: ATP synthase subunit beta (471 aa).

An ATP-binding site is contributed by 153 to 160; that stretch reads GGAGVGKT.

It belongs to the ATPase alpha/beta chains family. In terms of assembly, F-type ATPases have 2 components, CF(1) - the catalytic core - and CF(0) - the membrane proton channel. CF(1) has five subunits: alpha(3), beta(3), gamma(1), delta(1), epsilon(1). CF(0) has three main subunits: a(1), b(2) and c(9-12). The alpha and beta chains form an alternating ring which encloses part of the gamma chain. CF(1) is attached to CF(0) by a central stalk formed by the gamma and epsilon chains, while a peripheral stalk is formed by the delta and b chains.

Its subcellular location is the cell membrane. It catalyses the reaction ATP + H2O + 4 H(+)(in) = ADP + phosphate + 5 H(+)(out). Its function is as follows. Produces ATP from ADP in the presence of a proton gradient across the membrane. The catalytic sites are hosted primarily by the beta subunits. The polypeptide is ATP synthase subunit beta (Levilactobacillus brevis (strain ATCC 367 / BCRC 12310 / CIP 105137 / JCM 1170 / LMG 11437 / NCIMB 947 / NCTC 947) (Lactobacillus brevis)).